Reading from the N-terminus, the 216-residue chain is Adenylate kinase (216 aa).

Residue 10–15 (GAGKGT) participates in ATP binding. The interval 30–59 (STGDMFRAAMKAETEMGLQAKSFIDKGALV) is NMP. AMP-binding positions include T31, R36, 57–59 (ALV), 85–88 (GFPR), and Q92. The tract at residues 126–163 (GRRICKECGATYHLEFNPPAKADVCDKCGGELYQRSDD) is LID. R127 lines the ATP pocket. Residues C130 and C133 each coordinate Zn(2+). 136–137 (TY) serves as a coordination point for ATP. 2 residues coordinate Zn(2+): C150 and C153. Residues R160 and R171 each coordinate AMP. Q199 provides a ligand contact to ATP.

This sequence belongs to the adenylate kinase family. In terms of assembly, monomer.

It is found in the cytoplasm. The catalysed reaction is AMP + ATP = 2 ADP. The protein operates within purine metabolism; AMP biosynthesis via salvage pathway; AMP from ADP: step 1/1. Its function is as follows. Catalyzes the reversible transfer of the terminal phosphate group between ATP and AMP. Plays an important role in cellular energy homeostasis and in adenine nucleotide metabolism. This Bacillus cereus (strain G9842) protein is Adenylate kinase.